The chain runs to 238 residues: Purine nucleoside phosphorylase DeoD-type (238 aa).

His-4 lines the a purine D-ribonucleoside pocket. Phosphate-binding positions include Gly-20, Arg-24, Arg-43, and 87–90; that span reads RVGS. A purine D-ribonucleoside-binding positions include 179–181 and 203–204; these read EME and SD. Catalysis depends on Asp-204, which acts as the Proton donor.

Belongs to the PNP/UDP phosphorylase family. In terms of assembly, homohexamer; trimer of homodimers.

The catalysed reaction is a purine D-ribonucleoside + phosphate = a purine nucleobase + alpha-D-ribose 1-phosphate. The enzyme catalyses a purine 2'-deoxy-D-ribonucleoside + phosphate = a purine nucleobase + 2-deoxy-alpha-D-ribose 1-phosphate. Its function is as follows. Catalyzes the reversible phosphorolytic breakdown of the N-glycosidic bond in the beta-(deoxy)ribonucleoside molecules, with the formation of the corresponding free purine bases and pentose-1-phosphate. This Haemophilus influenzae (strain PittEE) protein is Purine nucleoside phosphorylase DeoD-type.